The sequence spans 193 residues: MNREKTLDSIPIDVFLDIFSRLPAKSVGRSCCVSNRWASILGSQDFKELFLTMSSTRPRLLFALKPYNGDECLFYSSPHPHNHYEKSTVVVTADFHTKFPKSQSDCIYASGLSWRNIQCPLTHYPQGKGICINGVLYYLASHDEKPYMIVSFDVRYEKFRFINKKCHSYELINYKGNPIWPCLYIIGSFSHFA.

The F-box domain occupies 4–53 (EKTLDSIPIDVFLDIFSRLPAKSVGRSCCVSNRWASILGSQDFKELFLTM).

This chain is Putative F-box protein At1g31072, found in Arabidopsis thaliana (Mouse-ear cress).